A 254-amino-acid polypeptide reads, in one-letter code: Glucosamine-6-phosphate deaminase (254 aa).

Catalysis depends on Asp67, which acts as the Proton acceptor; for enolization step. Asn136 (for ring-opening step) is an active-site residue. His138 acts as the Proton acceptor; for ring-opening step in catalysis. Glu143 functions as the For ring-opening step in the catalytic mechanism.

Belongs to the glucosamine/galactosamine-6-phosphate isomerase family. NagB subfamily.

It carries out the reaction alpha-D-glucosamine 6-phosphate + H2O = beta-D-fructose 6-phosphate + NH4(+). It participates in amino-sugar metabolism; N-acetylneuraminate degradation; D-fructose 6-phosphate from N-acetylneuraminate: step 5/5. In terms of biological role, catalyzes the reversible isomerization-deamination of glucosamine 6-phosphate (GlcN6P) to form fructose 6-phosphate (Fru6P) and ammonium ion. The protein is Glucosamine-6-phosphate deaminase of Brevibacillus brevis (strain 47 / JCM 6285 / NBRC 100599).